The chain runs to 545 residues: CTP synthase (545 aa).

An amidoligase domain region spans residues 1-265; the sequence is MSKYIFVTGG…DDLVVQNLGL (265 aa). S13 contributes to the CTP binding site. A UTP-binding site is contributed by S13. Residues 14–19 and D71 each bind ATP; that span reads SLGKGA. The Mg(2+) site is built by D71 and E139. Residues 146–148, 186–191, and K222 contribute to the CTP site; these read DIE and KTKPTQ. UTP-binding positions include 186–191 and K222; that span reads KTKPTQ. The 252-residue stretch at 290 to 541 folds into the Glutamine amidotransferase type-1 domain; it reads VIALVGKYVG…MRAAIAQRER (252 aa). G351 contacts L-glutamine. C378 functions as the Nucleophile; for glutamine hydrolysis in the catalytic mechanism. Residues 379–382, E402, and R469 each bind L-glutamine; that span reads LGMQ. Active-site residues include H514 and E516.

Belongs to the CTP synthase family. As to quaternary structure, homotetramer.

The catalysed reaction is UTP + L-glutamine + ATP + H2O = CTP + L-glutamate + ADP + phosphate + 2 H(+). It carries out the reaction L-glutamine + H2O = L-glutamate + NH4(+). The enzyme catalyses UTP + NH4(+) + ATP = CTP + ADP + phosphate + 2 H(+). It functions in the pathway pyrimidine metabolism; CTP biosynthesis via de novo pathway; CTP from UDP: step 2/2. Allosterically activated by GTP, when glutamine is the substrate; GTP has no effect on the reaction when ammonia is the substrate. The allosteric effector GTP functions by stabilizing the protein conformation that binds the tetrahedral intermediate(s) formed during glutamine hydrolysis. Inhibited by the product CTP, via allosteric rather than competitive inhibition. In terms of biological role, catalyzes the ATP-dependent amination of UTP to CTP with either L-glutamine or ammonia as the source of nitrogen. Regulates intracellular CTP levels through interactions with the four ribonucleotide triphosphates. The sequence is that of CTP synthase from Acidithiobacillus ferrooxidans (strain ATCC 23270 / DSM 14882 / CIP 104768 / NCIMB 8455) (Ferrobacillus ferrooxidans (strain ATCC 23270)).